The chain runs to 155 residues: uncharacterized protein (155 aa).

The region spanning 7–154 is the N-acetyltransferase domain; the sequence is LQINYKTLEE…VWLPESVELQ (148 aa).

This is an uncharacterized protein from Brevibacillus brevis (strain 47 / JCM 6285 / NBRC 100599).